The sequence spans 292 residues: 33 kDa chaperonin (292 aa).

Intrachain disulfides connect Cys-229–Cys-231 and Cys-262–Cys-265.

This sequence belongs to the HSP33 family. Under oxidizing conditions two disulfide bonds are formed involving the reactive cysteines. Under reducing conditions zinc is bound to the reactive cysteines and the protein is inactive.

The protein resides in the cytoplasm. Redox regulated molecular chaperone. Protects both thermally unfolding and oxidatively damaged proteins from irreversible aggregation. Plays an important role in the bacterial defense system toward oxidative stress. The sequence is that of 33 kDa chaperonin from Photobacterium profundum (strain SS9).